A 342-amino-acid chain; its full sequence is Succinylglutamate desuccinylase (342 aa).

Zn(2+)-binding residues include histidine 63, glutamate 66, and histidine 155. Glutamate 219 is an active-site residue.

Belongs to the AspA/AstE family. Succinylglutamate desuccinylase subfamily. Requires Zn(2+) as cofactor.

The catalysed reaction is N-succinyl-L-glutamate + H2O = L-glutamate + succinate. It participates in amino-acid degradation; L-arginine degradation via AST pathway; L-glutamate and succinate from L-arginine: step 5/5. Its function is as follows. Transforms N(2)-succinylglutamate into succinate and glutamate. This is Succinylglutamate desuccinylase from Vibrio vulnificus (strain CMCP6).